Consider the following 353-residue polypeptide: Guanine nucleotide-binding protein subunit beta-5 (353 aa).

7 WD repeats span residues Gly61–Ala100, Met103–Met142, Met151–His192, His194–Glu236, Thr237–Ile276, Ser278–Ile320, and Gly323–Trp352.

Belongs to the WD repeat G protein beta family. As to quaternary structure, component of a complex composed of RGS9 (isoform RGS9-1), GNB5 and RGS9BP; within this complex, the presence of GNB5 stabilizes both itself and RGS9 and increases RGS9 GTPase-activating protein (GAP) activity. Interacts with RGS7, forming the RGS7-GNB5 complex; within this complex, the presence of GNB5 increases RGS7 GTPase-activating protein (GAP) activity. Interacts with GPR158; promotes the GTPase activator activity of the RGS7-GNB5 complex in absence of glycine, in contrast GTPase activator activity of the RGS7-GNB5 complex is inhibited in presence of glycine. Interacts with RGS6.

Its subcellular location is the membrane. Enhances GTPase-activating protein (GAP) activity of regulator of G protein signaling (RGS) proteins, such as RGS7 and RGS9, hence involved in the termination of the signaling initiated by the G protein coupled receptors (GPCRs) by accelerating the GTP hydrolysis on the G-alpha subunits, thereby promoting their inactivation. Increases RGS7 GTPase-activating protein (GAP) activity, thereby regulating mood and cognition. Increases RGS9 GTPase-activating protein (GAP) activity, hence contributes to the deactivation of G protein signaling initiated by D(2) dopamine receptors. May play an important role in neuronal signaling, including in the parasympathetic, but not sympathetic, control of heart rate. In Oryctolagus cuniculus (Rabbit), this protein is Guanine nucleotide-binding protein subunit beta-5 (GNB5).